The sequence spans 458 residues: ATP synthase subunit beta (458 aa).

148 to 155 (GGAGVGKT) contacts ATP.

This sequence belongs to the ATPase alpha/beta chains family. As to quaternary structure, F-type ATPases have 2 components, CF(1) - the catalytic core - and CF(0) - the membrane proton channel. CF(1) has five subunits: alpha(3), beta(3), gamma(1), delta(1), epsilon(1). CF(0) has three main subunits: a(1), b(2) and c(9-12). The alpha and beta chains form an alternating ring which encloses part of the gamma chain. CF(1) is attached to CF(0) by a central stalk formed by the gamma and epsilon chains, while a peripheral stalk is formed by the delta and b chains.

It is found in the cell inner membrane. The enzyme catalyses ATP + H2O + 4 H(+)(in) = ADP + phosphate + 5 H(+)(out). Produces ATP from ADP in the presence of a proton gradient across the membrane. The catalytic sites are hosted primarily by the beta subunits. This is ATP synthase subunit beta from Pseudomonas entomophila (strain L48).